A 243-amino-acid polypeptide reads, in one-letter code: Collagen triple helix repeat-containing protein 1 (243 aa).

The N-terminal stretch at 1-30 (MRPQGPAASPQRLRGLLLLLLLQLPAPSSA) is a signal peptide. A Collagen-like domain is found at 57–90 (QGPAGVPGRDGSPGANGIPGTPGIPGRDGFKGEK). The disordered stretch occupies residues 62–85 (VPGRDGSPGANGIPGTPGIPGRDG). Residue N186 is glycosylated (N-linked (GlcNAc...) asparagine).

N-glycosylated. In terms of tissue distribution, isoform 1 is expressed in calcified atherosclerotic plaque and chondrocyte-like cells.

Its subcellular location is the secreted. The protein resides in the extracellular space. It is found in the extracellular matrix. Its function is as follows. May act as a negative regulator of collagen matrix deposition. This is Collagen triple helix repeat-containing protein 1 (CTHRC1) from Homo sapiens (Human).